The sequence spans 219 residues: Ribose-5-phosphate isomerase A (219 aa).

Substrate contacts are provided by residues S28 to T31, D81 to D84, and K94 to G97. E103 acts as the Proton acceptor in catalysis. Position 121 (K121) interacts with substrate.

This sequence belongs to the ribose 5-phosphate isomerase family. Homodimer.

The catalysed reaction is aldehydo-D-ribose 5-phosphate = D-ribulose 5-phosphate. The protein operates within carbohydrate degradation; pentose phosphate pathway; D-ribose 5-phosphate from D-ribulose 5-phosphate (non-oxidative stage): step 1/1. Its function is as follows. Catalyzes the reversible conversion of ribose-5-phosphate to ribulose 5-phosphate. The sequence is that of Ribose-5-phosphate isomerase A from Mannheimia succiniciproducens (strain KCTC 0769BP / MBEL55E).